Consider the following 190-residue polypeptide: Xanthine phosphoribosyltransferase (190 aa).

Positions 20 and 27 each coordinate xanthine. A 5-phospho-alpha-D-ribose 1-diphosphate-binding site is contributed by 128–132 (ANGKA). Lysine 156 provides a ligand contact to xanthine.

The protein belongs to the purine/pyrimidine phosphoribosyltransferase family. Xpt subfamily. As to quaternary structure, homodimer.

It localises to the cytoplasm. It carries out the reaction XMP + diphosphate = xanthine + 5-phospho-alpha-D-ribose 1-diphosphate. It participates in purine metabolism; XMP biosynthesis via salvage pathway; XMP from xanthine: step 1/1. In terms of biological role, converts the preformed base xanthine, a product of nucleic acid breakdown, to xanthosine 5'-monophosphate (XMP), so it can be reused for RNA or DNA synthesis. This is Xanthine phosphoribosyltransferase from Pseudomonas fluorescens (strain Pf0-1).